We begin with the raw amino-acid sequence, 158 residues long: 6,7-dimethyl-8-ribityllumazine synthase (158 aa).

Residues Phe22, 56 to 58, and 80 to 82 each bind 5-amino-6-(D-ribitylamino)uracil; these read ALE and VVI. 85–86 is a (2S)-2-hydroxy-3-oxobutyl phosphate binding site; sequence ET. His88 serves as the catalytic Proton donor. Asn113 contacts 5-amino-6-(D-ribitylamino)uracil. Arg127 contacts (2S)-2-hydroxy-3-oxobutyl phosphate.

Belongs to the DMRL synthase family.

The catalysed reaction is (2S)-2-hydroxy-3-oxobutyl phosphate + 5-amino-6-(D-ribitylamino)uracil = 6,7-dimethyl-8-(1-D-ribityl)lumazine + phosphate + 2 H2O + H(+). It functions in the pathway cofactor biosynthesis; riboflavin biosynthesis; riboflavin from 2-hydroxy-3-oxobutyl phosphate and 5-amino-6-(D-ribitylamino)uracil: step 1/2. Its function is as follows. Catalyzes the formation of 6,7-dimethyl-8-ribityllumazine by condensation of 5-amino-6-(D-ribitylamino)uracil with 3,4-dihydroxy-2-butanone 4-phosphate. This is the penultimate step in the biosynthesis of riboflavin. The chain is 6,7-dimethyl-8-ribityllumazine synthase from Neisseria gonorrhoeae (strain ATCC 700825 / FA 1090).